Here is a 224-residue protein sequence, read N- to C-terminus: Holliday junction branch migration complex subunit RuvA (224 aa).

The domain I stretch occupies residues 1 to 67 (MISWLKGEKV…EDGTSLYGFI (67 aa)). Positions 68 to 146 (EVNQRDLFRE…RFTDNDKTIH (79 aa)) are domain II. Positions 147–155 (ENKKGIEAN) are flexible linker. The interval 156–224 (QFSKYIDEIY…ILMKLSEKTT (69 aa)) is domain III.

Belongs to the RuvA family. As to quaternary structure, homotetramer. Forms an RuvA(8)-RuvB(12)-Holliday junction (HJ) complex. HJ DNA is sandwiched between 2 RuvA tetramers; dsDNA enters through RuvA and exits via RuvB. An RuvB hexamer assembles on each DNA strand where it exits the tetramer. Each RuvB hexamer is contacted by two RuvA subunits (via domain III) on 2 adjacent RuvB subunits; this complex drives branch migration. In the full resolvosome a probable DNA-RuvA(4)-RuvB(12)-RuvC(2) complex forms which resolves the HJ.

It localises to the cytoplasm. Its function is as follows. The RuvA-RuvB-RuvC complex processes Holliday junction (HJ) DNA during genetic recombination and DNA repair, while the RuvA-RuvB complex plays an important role in the rescue of blocked DNA replication forks via replication fork reversal (RFR). RuvA specifically binds to HJ cruciform DNA, conferring on it an open structure. The RuvB hexamer acts as an ATP-dependent pump, pulling dsDNA into and through the RuvAB complex. HJ branch migration allows RuvC to scan DNA until it finds its consensus sequence, where it cleaves and resolves the cruciform DNA. The sequence is that of Holliday junction branch migration complex subunit RuvA from Prochlorococcus marinus (strain NATL1A).